We begin with the raw amino-acid sequence, 326 residues long: Metallophosphoesterase domain-containing protein 1 (326 aa).

The protein belongs to the UPF0046 family. In terms of tissue distribution, expressed predominantly in adult brain.

Its function is as follows. May have metallophosphoesterase activity (in vitro). The protein is Metallophosphoesterase domain-containing protein 1 (MPPED1) of Homo sapiens (Human).